A 446-amino-acid polypeptide reads, in one-letter code: Probable glycine dehydrogenase (decarboxylating) subunit 1 (446 aa).

Belongs to the GcvP family. N-terminal subunit subfamily. In terms of assembly, the glycine cleavage system is composed of four proteins: P, T, L and H. In this organism, the P 'protein' is a heterodimer of two subunits.

It catalyses the reaction N(6)-[(R)-lipoyl]-L-lysyl-[glycine-cleavage complex H protein] + glycine + H(+) = N(6)-[(R)-S(8)-aminomethyldihydrolipoyl]-L-lysyl-[glycine-cleavage complex H protein] + CO2. Functionally, the glycine cleavage system catalyzes the degradation of glycine. The P protein binds the alpha-amino group of glycine through its pyridoxal phosphate cofactor; CO(2) is released and the remaining methylamine moiety is then transferred to the lipoamide cofactor of the H protein. This is Probable glycine dehydrogenase (decarboxylating) subunit 1 from Desulfitobacterium hafniense (strain DSM 10664 / DCB-2).